We begin with the raw amino-acid sequence, 176 residues long: Large ribosomal subunit protein uL10 (176 aa).

It belongs to the universal ribosomal protein uL10 family. As to quaternary structure, part of the ribosomal stalk of the 50S ribosomal subunit. The N-terminus interacts with L11 and the large rRNA to form the base of the stalk. The C-terminus forms an elongated spine to which L12 dimers bind in a sequential fashion forming a multimeric L10(L12)X complex.

Functionally, forms part of the ribosomal stalk, playing a central role in the interaction of the ribosome with GTP-bound translation factors. This chain is Large ribosomal subunit protein uL10, found in Alcanivorax borkumensis (strain ATCC 700651 / DSM 11573 / NCIMB 13689 / SK2).